The following is a 105-amino-acid chain: Large ribosomal subunit protein bL21 (105 aa).

It belongs to the bacterial ribosomal protein bL21 family. Part of the 50S ribosomal subunit. Contacts protein L20.

In terms of biological role, this protein binds to 23S rRNA in the presence of protein L20. In Phocaeicola vulgatus (strain ATCC 8482 / DSM 1447 / JCM 5826 / CCUG 4940 / NBRC 14291 / NCTC 11154) (Bacteroides vulgatus), this protein is Large ribosomal subunit protein bL21.